The following is a 401-amino-acid chain: MLKAAVIGLQWGDEGKGKVVTYLSRRYDCVVRYSGGSNAGHTVDYGNFKMVHHLLPSADIKKQKMMYIGPGVVVDLDVLLEEIDQINNLIPESRSLLRISKQAHVVIPIYRDLDEKIDSSRANQIGTTRRGIGISYANRAMRCGLRLEDFETPARAESFLNEISRTWSIKFDVKMILDSLIEKYNKIRDLLIDSSEAVRVLKEKDLLFEGTQGVLLDVDMGTYPYVTSTNCSTTGIQPGFGYPVQVDKIFGVMKAYTTRVGEGPFPTELKDEVGENLRRLGSEYGATTRRPRRCGWLDLVLIKYAIETSACNALIMTKADILSGFEKIPICMGYKIGGKFYTQINNTAHLTEIEPVYEEIKGWKSLHSKEFDDFIYKIERELGLKFAYISTGPKIEEITEL.

GTP-binding positions include 12–18 (GDEGKGK) and 40–42 (GHT). Asp13 functions as the Proton acceptor in the catalytic mechanism. 2 residues coordinate Mg(2+): Asp13 and Gly40. Residues 13–16 (DEGK), 38–41 (NAGH), Thr128, Arg142, Gln212, Thr227, and Arg290 each bind IMP. The active-site Proton donor is His41. Position 286–292 (286–292 (ATTRRPR)) interacts with substrate. GTP is bound by residues Arg292, 318–320 (KAD), and 390–392 (STG).

It belongs to the adenylosuccinate synthetase family. In terms of assembly, homodimer. Requires Mg(2+) as cofactor.

It is found in the cytoplasm. The catalysed reaction is IMP + L-aspartate + GTP = N(6)-(1,2-dicarboxyethyl)-AMP + GDP + phosphate + 2 H(+). It participates in purine metabolism; AMP biosynthesis via de novo pathway; AMP from IMP: step 1/2. Functionally, plays an important role in the de novo pathway of purine nucleotide biosynthesis. Catalyzes the first committed step in the biosynthesis of AMP from IMP. This chain is Adenylosuccinate synthetase, found in Pseudothermotoga lettingae (strain ATCC BAA-301 / DSM 14385 / NBRC 107922 / TMO) (Thermotoga lettingae).